Here is a 419-residue protein sequence, read N- to C-terminus: MAASSLEQKLSRLEAKLKQENREARRRIDLNLDISPQRPRPTLQLPLANDGGSRSPSSESSPQHPTPPARPRHMLGLPSTLFTPRSMESIEIDQKLQEIMKQTGYLTIGGQRYQAEINDLENLGEMGSGTCGQVWKMRFRKTGHVIAVKQMRRSGNKEENKRILMDLDVVLKSHDCPYIVQCFGTFITNTDVFIAMELMGTCAEKLKKRMQGPIPERILGKMTVAIVKALYYLKEKHGVIHRDVKPSNILLDERGQIKLCDFGISGRLVDSKAKTRSAGCAAYMAPERIDPPDPTKPDYDIRADVWSLGISLVELATGQFPYKNCKTDFEVLTKVLQEEPPLLPGHMGFSGDFQSFVKDCLTKDHRKRPKYNKLLEHSFIKRYETLEVDVASWFKDVMAKTESPRTSGVLSQPHLPFFR.

Ala-2 is subject to N-acetylalanine. Residues 2-30 adopt a coiled-coil conformation; the sequence is AASSLEQKLSRLEAKLKQENREARRRIDL. The segment covering 18–30 has biased composition (basic and acidic residues); sequence KQENREARRRIDL. The disordered stretch occupies residues 18-76; that stretch reads KQENREARRRIDLNLDISPQRPRPTLQLPLANDGGSRSPSSESSPQHPTPPARPRHMLG. Residues 36-63 are compositionally biased toward low complexity; the sequence is PQRPRPTLQLPLANDGGSRSPSSESSPQ. The d domain stretch occupies residues 37–57; that stretch reads QRPRPTLQLPLANDGGSRSPS. One can recognise a Protein kinase domain in the interval 120-380; it reads LENLGEMGSG…YNKLLEHSFI (261 aa). Residues 126 to 134 and Lys-149 each bind ATP; that span reads MGSGTCGQV. Asp-243 serves as the catalytic Proton acceptor. Ser-271 carries the phosphoserine; by MAP3K modification. Thr-275 carries the post-translational modification Phosphothreonine; by MAP3K. Positions 377–400 are DVD domain; sequence HSFIKRYETLEVDVASWFKDVMAK. At Ser-411 the chain carries Phosphoserine.

The protein belongs to the protein kinase superfamily. STE Ser/Thr protein kinase family. MAP kinase kinase subfamily. As to quaternary structure, interacts with isoform 1 of VRK2. Interacts (via its D domain) with its substrates MAPK8/JNK1, MAPK9/JNK2 and MAPK10/JNK3. Interacts (via its DVD domain) with MAP3Ks activators like MAP3K5/ASK1 and MAP3K1/MEKK1. Interacts with MAPK8IP1/JIP1, MAPK8IP2/JIP2 and MAPK8IP3/JIP3 scaffold proteins. Interacts with RASSF7, the interaction promotes phosphorylation. Found in a complex with SH3RF1, RAC1, MAP3K11/MLK3, MAPK8IP1/JIP1 and MAPK8/JNK1. Found in a complex with SH3RF1, RAC2, MAP3K7/TAK1, MAPK8IP1/JIP1, MAPK8/JNK1 and MAPK9/JNK2. The cofactor is Mg(2+). Post-translationally, activated by phosphorylation on Ser-271 and Thr-275 by MAP kinase kinase kinases (MAP3Ks). Ubiquitous; with highest level of expression in skeletal muscle. Isoform 3 is found at low levels in placenta, fetal liver, and skeletal muscle.

The protein resides in the nucleus. Its subcellular location is the cytoplasm. The catalysed reaction is L-seryl-[protein] + ATP = O-phospho-L-seryl-[protein] + ADP + H(+). The enzyme catalyses L-threonyl-[protein] + ATP = O-phospho-L-threonyl-[protein] + ADP + H(+). It catalyses the reaction L-tyrosyl-[protein] + ATP = O-phospho-L-tyrosyl-[protein] + ADP + H(+). With respect to regulation, activated by phosphorylation by specific MAP kinase kinase kinases such as MAP3K1/MEKK1, MAP3K3/MEKK3, MAP3K11/MLK3 and MAP3K12/DLK. In terms of biological role, dual specificity protein kinase which acts as an essential component of the MAP kinase signal transduction pathway. Essential component of the stress-activated protein kinase/c-Jun N-terminal kinase (SAP/JNK) signaling pathway. With MAP2K4/MKK4, is the one of the only known kinase to directly activate the stress-activated protein kinase/c-Jun N-terminal kinases MAPK8/JNK1, MAPK9/JNK2 and MAPK10/JNK3. MAP2K4/MKK4 and MAP2K7/MKK7 both activate the JNKs by phosphorylation, but they differ in their preference for the phosphorylation site in the Thr-Pro-Tyr motif. MAP2K4/MKK4 shows preference for phosphorylation of the Tyr residue and MAP2K7/MKK7 for the Thr residue. The monophosphorylation of JNKs on the Thr residue is sufficient to increase JNK activity indicating that MAP2K7/MKK7 is important to trigger JNK activity, while the additional phosphorylation of the Tyr residue by MAP2K4/MKK4 ensures optimal JNK activation. Has a specific role in JNK signal transduction pathway activated by pro-inflammatory cytokines. The MKK/JNK signaling pathway is also involved in mitochondrial death signaling pathway, including the release cytochrome c, leading to apoptosis. Part of a non-canonical MAPK signaling pathway, composed of the upstream MAP3K12 kinase and downstream MAP kinases MAPK1/ERK2 and MAPK3/ERK1, that enhances the AP-1-mediated transcription of APP in response to APOE. This chain is Dual specificity mitogen-activated protein kinase kinase 7 (MAP2K7), found in Homo sapiens (Human).